Consider the following 217-residue polypeptide: Cytidylate kinase (217 aa).

Residue 9 to 17 (GPSSSGKSS) participates in ATP binding.

Belongs to the cytidylate kinase family. Type 1 subfamily.

It localises to the cytoplasm. The enzyme catalyses CMP + ATP = CDP + ADP. It catalyses the reaction dCMP + ATP = dCDP + ADP. In Mycoplasma pneumoniae (strain ATCC 29342 / M129 / Subtype 1) (Mycoplasmoides pneumoniae), this protein is Cytidylate kinase.